The chain runs to 198 residues: Uracil phosphoribosyltransferase homolog (198 aa).

The protein belongs to the UPRTase family.

It localises to the plastid. Its subcellular location is the chloroplast. This Pyropia yezoensis (Susabi-nori) protein is Uracil phosphoribosyltransferase homolog.